A 36-amino-acid chain; its full sequence is Photosystem I reaction center subunit VIII (36 aa).

Residues 8–28 (SILVPLVGLVFPAIAMASLFL) traverse the membrane as a helical segment.

Belongs to the PsaI family.

The protein resides in the plastid. It is found in the chloroplast thylakoid membrane. May help in the organization of the PsaL subunit. The chain is Photosystem I reaction center subunit VIII from Vitis vinifera (Grape).